Here is a 157-residue protein sequence, read N- to C-terminus: Crossover junction endodeoxyribonuclease RuvC (157 aa).

Active-site residues include aspartate 7, glutamate 70, and aspartate 142. Aspartate 7, glutamate 70, and aspartate 142 together coordinate Mg(2+).

Belongs to the RuvC family. In terms of assembly, homodimer which binds Holliday junction (HJ) DNA. The HJ becomes 2-fold symmetrical on binding to RuvC with unstacked arms; it has a different conformation from HJ DNA in complex with RuvA. In the full resolvosome a probable DNA-RuvA(4)-RuvB(12)-RuvC(2) complex forms which resolves the HJ. Mg(2+) is required as a cofactor.

Its subcellular location is the cytoplasm. The catalysed reaction is Endonucleolytic cleavage at a junction such as a reciprocal single-stranded crossover between two homologous DNA duplexes (Holliday junction).. Its function is as follows. The RuvA-RuvB-RuvC complex processes Holliday junction (HJ) DNA during genetic recombination and DNA repair. Endonuclease that resolves HJ intermediates. Cleaves cruciform DNA by making single-stranded nicks across the HJ at symmetrical positions within the homologous arms, yielding a 5'-phosphate and a 3'-hydroxyl group; requires a central core of homology in the junction. The consensus cleavage sequence is 5'-(A/T)TT(C/G)-3'. Cleavage occurs on the 3'-side of the TT dinucleotide at the point of strand exchange. HJ branch migration catalyzed by RuvA-RuvB allows RuvC to scan DNA until it finds its consensus sequence, where it cleaves and resolves the cruciform DNA. The protein is Crossover junction endodeoxyribonuclease RuvC of Synechococcus sp. (strain RCC307).